An 802-amino-acid polypeptide reads, in one-letter code: Leucine--tRNA ligase (802 aa).

The 'HIGH' region motif lies at 40-51 (PYPSGAGLHVGH). Residues 576-580 (KMSKS) carry the 'KMSKS' region motif. ATP is bound at residue Lys579.

This sequence belongs to the class-I aminoacyl-tRNA synthetase family.

The protein resides in the cytoplasm. It catalyses the reaction tRNA(Leu) + L-leucine + ATP = L-leucyl-tRNA(Leu) + AMP + diphosphate. The protein is Leucine--tRNA ligase of Bacillus cereus (strain B4264).